We begin with the raw amino-acid sequence, 624 residues long: Bifunctional protein ArgH (624 aa).

The argininosuccinate lyase stretch occupies residues M1–V466. Residues V464–S614 form the N-acetyltransferase domain. The tract at residues R467–A624 is probable acetyltransferase.

This sequence in the N-terminal section; belongs to the lyase 1 family. Argininosuccinate lyase subfamily.

Its subcellular location is the cytoplasm. The enzyme catalyses 2-(N(omega)-L-arginino)succinate = fumarate + L-arginine. The protein operates within amino-acid biosynthesis; L-arginine biosynthesis; L-arginine from L-ornithine and carbamoyl phosphate: step 3/3. The chain is Bifunctional protein ArgH (argH) from Vibrio vulnificus (strain CMCP6).